A 461-amino-acid chain; its full sequence is Phosphomethylpyrimidine synthase (461 aa).

Residues Asn80, Met109, Tyr138, His173, 193 to 195 (SRG), 234 to 237 (DGLR), and Glu273 contribute to the substrate site. Residue His277 coordinates Zn(2+). Tyr300 serves as a coordination point for substrate. His341 serves as a coordination point for Zn(2+). Residues Cys421, Cys424, and Cys429 each contribute to the [4Fe-4S] cluster site.

This sequence belongs to the ThiC family. [4Fe-4S] cluster serves as cofactor.

It catalyses the reaction 5-amino-1-(5-phospho-beta-D-ribosyl)imidazole + S-adenosyl-L-methionine = 4-amino-2-methyl-5-(phosphooxymethyl)pyrimidine + CO + 5'-deoxyadenosine + formate + L-methionine + 3 H(+). The protein operates within cofactor biosynthesis; thiamine diphosphate biosynthesis. Functionally, catalyzes the synthesis of the hydroxymethylpyrimidine phosphate (HMP-P) moiety of thiamine from aminoimidazole ribotide (AIR) in a radical S-adenosyl-L-methionine (SAM)-dependent reaction. This chain is Phosphomethylpyrimidine synthase, found in Solibacter usitatus (strain Ellin6076).